The chain runs to 317 residues: Pantothenate kinase (317 aa).

99–106 lines the ATP pocket; sequence GSVSVGKS.

Belongs to the prokaryotic pantothenate kinase family.

The protein resides in the cytoplasm. The catalysed reaction is (R)-pantothenate + ATP = (R)-4'-phosphopantothenate + ADP + H(+). Its pathway is cofactor biosynthesis; coenzyme A biosynthesis; CoA from (R)-pantothenate: step 1/5. The protein is Pantothenate kinase of Mannheimia succiniciproducens (strain KCTC 0769BP / MBEL55E).